The sequence spans 348 residues: Photosystem II protein D1 (348 aa).

3 helical membrane-spanning segments follow: residues 33–50, 122–137, and 146–160; these read YIGW…LATV, HFIL…EWEF, and WIFV…AASA. H122 is a chlorophyll a binding site. Residue Y130 participates in pheophytin a binding. 2 residues coordinate [CaMn4O5] cluster: D174 and E193. The chain crosses the membrane as a helical span at residues 201 to 222; the sequence is FHILGVAAVFGGSLFSAMHGSL. A chlorophyll a-binding site is contributed by H202. Residues H219 and 268 to 269 contribute to the a quinone site; that span reads SF. Fe cation is bound at residue H219. Fe cation is bound at residue H276. Residues 278–292 form a helical membrane-spanning segment; that stretch reads FLAAWPVIGIWFTAL. H336, E337, D346, and A348 together coordinate [CaMn4O5] cluster.

The protein belongs to the reaction center PufL/M/PsbA/D family. PSII is composed of 1 copy each of membrane proteins PsbA, PsbB, PsbC, PsbD, PsbE, PsbF, PsbH, PsbI, PsbJ, PsbK, PsbL, PsbM, PsbT, PsbX, PsbY, PsbZ, Psb30/Ycf12, at least 3 peripheral proteins of the oxygen-evolving complex and a large number of cofactors. It forms dimeric complexes. It depends on The D1/D2 heterodimer binds P680, chlorophylls that are the primary electron donor of PSII, and subsequent electron acceptors. It shares a non-heme iron and each subunit binds pheophytin, quinone, additional chlorophylls, carotenoids and lipids. D1 provides most of the ligands for the Mn4-Ca-O5 cluster of the oxygen-evolving complex (OEC). There is also a Cl(-1) ion associated with D1 and D2, which is required for oxygen evolution. The PSII complex binds additional chlorophylls, carotenoids and specific lipids. as a cofactor. Post-translationally, tyr-165 forms a radical intermediate that is referred to as redox-active TyrZ, YZ or Y-Z.

It localises to the plastid. The protein resides in the chloroplast thylakoid membrane. The catalysed reaction is 2 a plastoquinone + 4 hnu + 2 H2O = 2 a plastoquinol + O2. Functionally, photosystem II (PSII) is a light-driven water:plastoquinone oxidoreductase that uses light energy to abstract electrons from H(2)O, generating O(2) and a proton gradient subsequently used for ATP formation. It consists of a core antenna complex that captures photons, and an electron transfer chain that converts photonic excitation into a charge separation. The D1/D2 (PsbA/PsbD) reaction center heterodimer binds P680, the primary electron donor of PSII as well as several subsequent electron acceptors. This is Photosystem II protein D1 from Heterocapsa pygmaea (Dinoflagellate).